An 87-amino-acid chain; its full sequence is Small ribosomal subunit protein bS20 (87 aa).

Residues 1-11 (MANIKSAKKRA) show a composition bias toward basic residues. The disordered stretch occupies residues 1–27 (MANIKSAKKRAVQSEKRRQHNASQRSM).

The protein belongs to the bacterial ribosomal protein bS20 family.

Binds directly to 16S ribosomal RNA. The sequence is that of Small ribosomal subunit protein bS20 from Actinobacillus succinogenes (strain ATCC 55618 / DSM 22257 / CCUG 43843 / 130Z).